The following is a 488-amino-acid chain: 3-octaprenyl-4-hydroxybenzoate carboxy-lyase (488 aa).

N172 is a Mn(2+) binding site. Prenylated FMN contacts are provided by residues 175–177 (IYR), 189–191 (RWL), and 194–195 (RG). Position 238 (E238) interacts with Mn(2+). D287 serves as the catalytic Proton donor.

Belongs to the UbiD family. As to quaternary structure, homohexamer. The cofactor is prenylated FMN. Mn(2+) is required as a cofactor.

The protein localises to the cell membrane. The catalysed reaction is a 4-hydroxy-3-(all-trans-polyprenyl)benzoate + H(+) = a 2-(all-trans-polyprenyl)phenol + CO2. It functions in the pathway cofactor biosynthesis; ubiquinone biosynthesis. Its function is as follows. Catalyzes the decarboxylation of 3-octaprenyl-4-hydroxy benzoate to 2-octaprenylphenol, an intermediate step in ubiquinone biosynthesis. The polypeptide is 3-octaprenyl-4-hydroxybenzoate carboxy-lyase (Halorhodospira halophila (strain DSM 244 / SL1) (Ectothiorhodospira halophila (strain DSM 244 / SL1))).